A 221-amino-acid polypeptide reads, in one-letter code: Histidine biosynthesis bifunctional protein HisIE (221 aa).

The phosphoribosyl-AMP cyclohydrolase stretch occupies residues 1-121 (MNITKIDWQK…KKQQFANWAW (121 aa)). Residues 122-221 (FIKLEQHLKE…IGLHPEGGNK (100 aa)) are phosphoribosyl-ATP pyrophosphohydrolase.

The protein in the N-terminal section; belongs to the PRA-CH family. It in the C-terminal section; belongs to the PRA-PH family.

The protein resides in the cytoplasm. The enzyme catalyses 1-(5-phospho-beta-D-ribosyl)-ATP + H2O = 1-(5-phospho-beta-D-ribosyl)-5'-AMP + diphosphate + H(+). It carries out the reaction 1-(5-phospho-beta-D-ribosyl)-5'-AMP + H2O = 1-(5-phospho-beta-D-ribosyl)-5-[(5-phospho-beta-D-ribosylamino)methylideneamino]imidazole-4-carboxamide. Its pathway is amino-acid biosynthesis; L-histidine biosynthesis; L-histidine from 5-phospho-alpha-D-ribose 1-diphosphate: step 2/9. It functions in the pathway amino-acid biosynthesis; L-histidine biosynthesis; L-histidine from 5-phospho-alpha-D-ribose 1-diphosphate: step 3/9. The polypeptide is Histidine biosynthesis bifunctional protein HisIE (hisI) (Haemophilus influenzae (strain ATCC 51907 / DSM 11121 / KW20 / Rd)).